Consider the following 317-residue polypeptide: Methionyl-tRNA formyltransferase (317 aa).

112–115 (SILP) is a binding site for (6S)-5,6,7,8-tetrahydrofolate.

Belongs to the Fmt family.

The catalysed reaction is L-methionyl-tRNA(fMet) + (6R)-10-formyltetrahydrofolate = N-formyl-L-methionyl-tRNA(fMet) + (6S)-5,6,7,8-tetrahydrofolate + H(+). In terms of biological role, attaches a formyl group to the free amino group of methionyl-tRNA(fMet). The formyl group appears to play a dual role in the initiator identity of N-formylmethionyl-tRNA by promoting its recognition by IF2 and preventing the misappropriation of this tRNA by the elongation apparatus. This chain is Methionyl-tRNA formyltransferase, found in Mannheimia succiniciproducens (strain KCTC 0769BP / MBEL55E).